The sequence spans 612 residues: Dihydroxy-acid dehydratase (612 aa).

Asp81 contacts Mg(2+). Residue Cys122 participates in [2Fe-2S] cluster binding. Mg(2+) contacts are provided by Asp123 and Lys124. Lys124 is modified (N6-carboxylysine). Cys195 provides a ligand contact to [2Fe-2S] cluster. A Mg(2+)-binding site is contributed by Glu491. Catalysis depends on Ser517, which acts as the Proton acceptor.

The protein belongs to the IlvD/Edd family. As to quaternary structure, homodimer. The cofactor is [2Fe-2S] cluster. It depends on Mg(2+) as a cofactor.

It catalyses the reaction (2R)-2,3-dihydroxy-3-methylbutanoate = 3-methyl-2-oxobutanoate + H2O. The enzyme catalyses (2R,3R)-2,3-dihydroxy-3-methylpentanoate = (S)-3-methyl-2-oxopentanoate + H2O. It functions in the pathway amino-acid biosynthesis; L-isoleucine biosynthesis; L-isoleucine from 2-oxobutanoate: step 3/4. Its pathway is amino-acid biosynthesis; L-valine biosynthesis; L-valine from pyruvate: step 3/4. Its function is as follows. Functions in the biosynthesis of branched-chain amino acids. Catalyzes the dehydration of (2R,3R)-2,3-dihydroxy-3-methylpentanoate (2,3-dihydroxy-3-methylvalerate) into 2-oxo-3-methylpentanoate (2-oxo-3-methylvalerate) and of (2R)-2,3-dihydroxy-3-methylbutanoate (2,3-dihydroxyisovalerate) into 2-oxo-3-methylbutanoate (2-oxoisovalerate), the penultimate precursor to L-isoleucine and L-valine, respectively. The protein is Dihydroxy-acid dehydratase of Rhizobium rhizogenes (strain K84 / ATCC BAA-868) (Agrobacterium radiobacter).